The sequence spans 723 residues: Calpastatin (723 aa).

Disordered regions lie at residues 1-402 (MNPT…PGRC) and 422-509 (STHS…LPPL). Basic residues predominate over residues 21–30 (PNKKRHKKQA). Residue lysine 32 forms a Glycyl lysine isopeptide (Lys-Gly) (interchain with G-Cter in SUMO2) linkage. The span at 46 to 84 (VVHEKKTQEVKPKEHTEPKSQPKHPSDTRSKHAPKEKAV) shows a compositional bias: basic and acidic residues. Residue lysine 50 is modified to N6-acetyllysine. Low complexity-rich tracts occupy residues 85–94 (SKSSEQPPSE) and 113–125 (SAVPAVAAAASAE). Serine 87 is subject to Phosphoserine. Threonine 137 bears the Phosphothreonine mark. The span at 157-173 (TALDDLIDTLGEPEETK) shows a compositional bias: acidic residues. An Inhibitory domain 1 repeat occupies 171–224 (ETKEDTTTYTGPEVSDPMSSTYIEELGKREVTLPPKYRELLNKEEGIAGPPPDS). The segment covering 195–216 (ELGKREVTLPPKYRELLNKEEG) has biased composition (basic and acidic residues). Phosphoserine is present on residues serine 224 and serine 245. Composition is skewed to basic and acidic residues over residues 249 to 263 (DAKKTEKEKSTEEAL) and 306 to 367 (PRPE…KPLS). An Inhibitory domain 2 repeat occupies 307-359 (RPELDPSSIKEVDEAKAKEEKVKKCGEDEERVPSEYRLKPATDKDGKPLLPEA). A phosphoserine mark is found at serine 367, serine 369, and serine 376. Over residues 378-396 (DFDRSKCKEKQSKPTEKNR) the composition is skewed to basic and acidic residues. The residue at position 443 (serine 443) is a Phosphoserine. The segment covering 445–504 (GKKEADPEDGKPVEDKVKEKAKEEDREKLGEREETIPPDYRLEEAKDKDGKPLPPKEVKE) has biased composition (basic and acidic residues). The Inhibitory domain 3 repeat unit spans residues 449-502 (ADPEDGKPVEDKVKEKAKEEDREKLGEREETIPPDYRLEEAKDKDGKPLPPKEV). Phosphoserine is present on residues serine 519 and serine 530. Residues 547–723 (SQTPAPTTQA…KPKADGKSTS (177 aa)) are disordered. The segment covering 548 to 560 (QTPAPTTQAAGPP) has biased composition (low complexity). The segment covering 562–571 (DSARDNKELD) has biased composition (basic and acidic residues). Serine 578 and serine 580 each carry phosphoserine. One copy of the Inhibitory domain 4 repeat lies at 586-642 (PDPDEHKPVEDKVKEKAKAEHRDKLGERDDTIPPKYQHLLDDNKEGTPGKPKRSESP). Over residues 586–643 (PDPDEHKPVEDKVKEKAKAEHRDKLGERDDTIPPKYQHLLDDNKEGTPGKPKRSESPR) the composition is skewed to basic and acidic residues. Polar residues predominate over residues 653-670 (NLQVPRTPLTPSQGTWTA). Residues 672–690 (PQLQKPQQTQQRTKTRSLL) are compositionally biased toward low complexity. A compositionally biased stretch (basic and acidic residues) spans 701–723 (KAKDSTKAKEETSKPKADGKSTS).

This sequence belongs to the protease inhibitor I27 (calpastatin) family.

Functionally, specific inhibition of calpain (calcium-dependent cysteine protease). Plays a key role in postmortem tenderization of meat and have been proposed to be involved in muscle protein degradation in living tissue. In Ovis aries (Sheep), this protein is Calpastatin (CAST).